A 130-amino-acid polypeptide reads, in one-letter code: Small ribosomal subunit protein uS8 (130 aa).

This sequence belongs to the universal ribosomal protein uS8 family. As to quaternary structure, part of the 30S ribosomal subunit.

One of the primary rRNA binding proteins, it binds directly to 16S rRNA central domain where it helps coordinate assembly of the platform of the 30S subunit. The polypeptide is Small ribosomal subunit protein uS8 (Pyrococcus furiosus (strain ATCC 43587 / DSM 3638 / JCM 8422 / Vc1)).